Reading from the N-terminus, the 115-residue chain is MNFALILMINTLLALLLMIITFWLPQLNGYMEKSTPYECGFDPMSPARVPFSMKFFLVAITFLLFDLEIALLLPLPWALQTTNLPLMVMSSLLLIIILALSLAYEWLQKGLDWTE.

The next 3 helical transmembrane spans lie at 3 to 23 (FALI…ITFW), 55 to 75 (FFLV…LLPL), and 84 to 104 (LPLM…SLAY).

It belongs to the complex I subunit 3 family. As to quaternary structure, core subunit of respiratory chain NADH dehydrogenase (Complex I) which is composed of 45 different subunits. Interacts with TMEM186. Interacts with TMEM242.

It localises to the mitochondrion inner membrane. The catalysed reaction is a ubiquinone + NADH + 5 H(+)(in) = a ubiquinol + NAD(+) + 4 H(+)(out). In terms of biological role, core subunit of the mitochondrial membrane respiratory chain NADH dehydrogenase (Complex I) which catalyzes electron transfer from NADH through the respiratory chain, using ubiquinone as an electron acceptor. Essential for the catalytic activity of complex I. This Homo sapiens (Human) protein is NADH-ubiquinone oxidoreductase chain 3.